A 95-amino-acid polypeptide reads, in one-letter code: Co-chaperonin GroES (95 aa).

It belongs to the GroES chaperonin family. Heptamer of 7 subunits arranged in a ring. Interacts with the chaperonin GroEL.

It is found in the cytoplasm. Its function is as follows. Together with the chaperonin GroEL, plays an essential role in assisting protein folding. The GroEL-GroES system forms a nano-cage that allows encapsulation of the non-native substrate proteins and provides a physical environment optimized to promote and accelerate protein folding. GroES binds to the apical surface of the GroEL ring, thereby capping the opening of the GroEL channel. This Francisella philomiragia subsp. philomiragia (strain ATCC 25017 / CCUG 19701 / FSC 153 / O#319-036) protein is Co-chaperonin GroES.